Here is a 324-residue protein sequence, read N- to C-terminus: DNA-directed RNA polymerase subunit alpha (324 aa).

Positions Met-1–Glu-230 are alpha N-terminal domain (alpha-NTD). The alpha C-terminal domain (alpha-CTD) stretch occupies residues Val-244 to Ala-324.

The protein belongs to the RNA polymerase alpha chain family. As to quaternary structure, homodimer. The RNAP catalytic core consists of 2 alpha, 1 beta, 1 beta' and 1 omega subunit. When a sigma factor is associated with the core the holoenzyme is formed, which can initiate transcription.

The enzyme catalyses RNA(n) + a ribonucleoside 5'-triphosphate = RNA(n+1) + diphosphate. In terms of biological role, DNA-dependent RNA polymerase catalyzes the transcription of DNA into RNA using the four ribonucleoside triphosphates as substrates. The chain is DNA-directed RNA polymerase subunit alpha from Dechloromonas aromatica (strain RCB).